A 171-amino-acid polypeptide reads, in one-letter code: 3-hydroxydecanoyl-[acyl-carrier-protein] dehydratase (171 aa).

H70 is an active-site residue.

This sequence belongs to the thioester dehydratase family. FabA subfamily. As to quaternary structure, homodimer.

It localises to the cytoplasm. It carries out the reaction a (3R)-hydroxyacyl-[ACP] = a (2E)-enoyl-[ACP] + H2O. It catalyses the reaction (3R)-hydroxydecanoyl-[ACP] = (2E)-decenoyl-[ACP] + H2O. The catalysed reaction is (2E)-decenoyl-[ACP] = (3Z)-decenoyl-[ACP]. It functions in the pathway lipid metabolism; fatty acid biosynthesis. Its function is as follows. Necessary for the introduction of cis unsaturation into fatty acids. Catalyzes the dehydration of (3R)-3-hydroxydecanoyl-ACP to E-(2)-decenoyl-ACP and then its isomerization to Z-(3)-decenoyl-ACP. Can catalyze the dehydratase reaction for beta-hydroxyacyl-ACPs with saturated chain lengths up to 16:0, being most active on intermediate chain length. The chain is 3-hydroxydecanoyl-[acyl-carrier-protein] dehydratase from Pseudomonas syringae pv. tomato (strain ATCC BAA-871 / DC3000).